The chain runs to 381 residues: Putative acyl-CoA dehydrogenase YdbM (381 aa).

FAD contacts are provided by residues 158–160 (FTT) and 337–341 (RIVGA).

It belongs to the acyl-CoA dehydrogenase family. Requires FAD as cofactor.

In Bacillus subtilis (strain 168), this protein is Putative acyl-CoA dehydrogenase YdbM (ydbM).